The following is a 194-amino-acid chain: MGVFNRLRSFYEARIAPTVASFLSRISPDPNIYTLASPVAAAAALPAWLYISPVASLLLIALSLLLDAVDGAVARFTGRVSPLGSFLDSSLDRISDSLYHATLYIAGVHPLIVIAMLSGGLIVPYLRAKGESLGLEVRGRGLMERGERSIAILAILAISIYNLQTALALASAAAVLVWITVIQRMVYIAGELRR.

Helical transmembrane passes span 32-51 and 58-78; these read IYTL…WLYI and LLIA…RFTG. Mg(2+)-binding residues include D67, D70, D88, and D92. The Proton acceptor role is filled by D92. Transmembrane regions (helical) follow at residues 103 to 123, 150 to 170, and 172 to 192; these read LYIA…GLIV, IAIL…LALA, and AAAV…AGEL.

Belongs to the CDP-alcohol phosphatidyltransferase class-I family. Mn(2+) is required as a cofactor. Requires Mg(2+) as cofactor.

Its subcellular location is the cell membrane. The catalysed reaction is CDP-2,3-bis-O-(phytanyl)-sn-glycerol + 1D-myo-inositol 3-phosphate = saturated 1-archaetidyl-1D-myo-inositol 3-phosphate + CMP + H(+). It functions in the pathway lipid metabolism; phospholipid metabolism. Functionally, catalyzes the formation of archaetidylinositol phosphate (AIP) from CDP-archaeol (CDP-ArOH or CDP-2,3-bis-(O-phytanyl)-sn-glycerol) and 1L-myo-inositol 1-phosphate (IP or 1D-myo-inositol 3-phosphate). AIP is a precursor of archaetidyl-myo-inositol (AI), an ether-type inositol phospholipid ubiquitously distributed in archaea membranes and essential for glycolipid biosynthesis in archaea. The polypeptide is Archaetidylinositol phosphate synthase (Aeropyrum pernix (strain ATCC 700893 / DSM 11879 / JCM 9820 / NBRC 100138 / K1)).